A 117-amino-acid polypeptide reads, in one-letter code: UPF0251 protein DehaBAV1_0135 (117 aa).

Belongs to the UPF0251 family.

In Dehalococcoides mccartyi (strain ATCC BAA-2100 / JCM 16839 / KCTC 5957 / BAV1), this protein is UPF0251 protein DehaBAV1_0135.